The following is an 842-amino-acid chain: Serine/threonine-protein kinase CLA4 (842 aa).

The interval 12–34 is disordered; sequence DNDFQNIGPAPRPPSSNSQGRTC. 2 positions are modified to phosphoserine: Ser-29 and Ser-46. In terms of domain architecture, PH spans 61–179; it reads SKKKSGWVSY…WLDAIFAKCP (119 aa). Residues 184–197 enclose the CRIB domain; sequence VSSPTNFTHKVHVG. Polar residues predominate over residues 247-274; the sequence is GNPTNTLDKPQSGETSSSQKSLPNSYND. Residues 247-524 are disordered; that stretch reads GNPTNTLDKP…KPKKPARPTM (278 aa). The segment covering 279-296 has biased composition (low complexity); the sequence is NNSVNSKSSSGVSSSMVS. The span at 297–307 shows a compositional bias: polar residues; it reads QRKTSQPPNTK. The segment covering 308-319 has biased composition (low complexity); the sequence is SPVSLGSGSLPP. Residues 323-343 show a composition bias toward polar residues; sequence KLPTSQSNIPRHLQNVPNQQY. A phosphoserine mark is found at Ser-351 and Ser-367. Residues 372-387 are compositionally biased toward low complexity; sequence QQQQQQQQQQKQQHQQ. Residues 396 to 408 are compositionally biased toward pro residues; sequence SPSPSPSPSPLNP. The span at 418–435 shows a compositional bias: low complexity; it reads PYSKQPQSPLSSQSTQNQ. At Ser-425 the chain carries Phosphoserine. 2 stretches are compositionally biased toward polar residues: residues 470-481 and 488-497; these read PSNQNATSNTHV and NDQSTPQTMR. The 280-residue stretch at 546–825 folds into the Protein kinase domain; it reads FKVIEKAGQG…TEELLHHGFF (280 aa). Residues 552–560 and Lys-594 contribute to the ATP site; that span reads AGQGASGSV. Asp-693 (proton acceptor) is an active-site residue.

It belongs to the protein kinase superfamily. STE Ser/Thr protein kinase family. STE20 subfamily. As to quaternary structure, interacts with CDC42.

It catalyses the reaction L-seryl-[protein] + ATP = O-phospho-L-seryl-[protein] + ADP + H(+). The enzyme catalyses L-threonyl-[protein] + ATP = O-phospho-L-threonyl-[protein] + ADP + H(+). Its function is as follows. Involved in budding and cytokinesis. In Saccharomyces cerevisiae (strain ATCC 204508 / S288c) (Baker's yeast), this protein is Serine/threonine-protein kinase CLA4 (CLA4).